The following is a 300-amino-acid chain: MFGLRKSPANLPKHNSVDLKSSKPNPFDSDDESDNKHTLNPSKRTTSEPSLADMTNPFGGERVQKGDSSSSKQSLFSNSKYQYKNNFRDSGGIENQSVQELEGYAVYKAEETTKSVQGCLKVAEDIRSDATRTLVMLHDQGEQITRTHHKAVEIDHDLSRGEKLLGSLGGMFSKTWKPKKTRPINGPVVTRDDSPTRRVNHLEKREKLGLNSAPRGQSRTREPLPESADAYQRVEMEKAKQDDGLSDLSDILGELKNMAVDMGSEIEKQNKGLDHLHDDVDELNFRVQQSNQRGRRLLGK.

2 disordered regions span residues 1-76 and 176-228; these read MFGL…QSLF and WKPK…PESA. Ser-29 bears the Phosphoserine mark. Over residues 38–49 the composition is skewed to polar residues; sequence TLNPSKRTTSEP. The segment covering 190 to 208 has biased composition (basic and acidic residues); sequence TRDDSPTRRVNHLEKREKL. The t-SNARE coiled-coil homology domain occupies 235–297; it reads EMEKAKQDDG…QQSNQRGRRL (63 aa).

It belongs to the SNAP-25 family. Interacts with the cytokinesis-specific syntaxin KNOLLE and with SYP121. Binds to EXO70B2. As to expression, ubiquitous, with a strong expression in root tips, ovules, very young leaves, vascular tissue, hydathodes, stipules and the abscission and dehiscence zones of the siliques.

It is found in the membrane. Its function is as follows. t-SNARE involved in diverse vesicle trafficking and membrane fusion processes, including cell plate formation. May function in the secretory pathway. The chain is SNAP25 homologous protein SNAP33 from Arabidopsis thaliana (Mouse-ear cress).